We begin with the raw amino-acid sequence, 549 residues long: Probable glucuronosyltransferase Os01g0157700 (549 aa).

The Cytoplasmic segment spans residues 1–16 (MDSEERSKKRLRLWSR). Residues 17-37 (AVVHFSLCFAIGVFAALLPLA) form a helical; Signal-anchor for type II membrane protein membrane-spanning segment. Residues 38-549 (ATGATSIDSI…TPEEGKTKEG (512 aa)) lie on the Lumenal side of the membrane. 9 N-linked (GlcNAc...) asparagine glycosylation sites follow: Asn-112, Asn-139, Asn-214, Asn-229, Asn-240, Asn-251, Asn-264, Asn-269, and Asn-300. The tract at residues 232 to 252 (ETTWDSSSNTTQTTWDSSSNK) is disordered. A compositionally biased stretch (basic and acidic residues) spans 350-363 (IEQATPEKESLTKG). Disordered regions lie at residues 350–371 (IEQA…SHDM), 413–432 (EQET…ESHD), and 441–524 (KIEE…KETH). N-linked (GlcNAc...) asparagine glycosylation is found at Asn-421 and Asn-452. Composition is skewed to basic and acidic residues over residues 441-465 (KIEE…HDMM), 472-496 (KIDE…HDMM), and 503-524 (KIEE…KETH).

Belongs to the glycosyltransferase 43 family.

It localises to the golgi apparatus membrane. Involved in the synthesis of glucuronoxylan hemicellulose in secondary cell walls. This Oryza sativa subsp. japonica (Rice) protein is Probable glucuronosyltransferase Os01g0157700.